The following is a 432-amino-acid chain: Adenylosuccinate synthetase (432 aa).

GTP contacts are provided by residues Gly13–Lys19 and Gly41–Thr43. The Proton acceptor role is filled by Asp14. Mg(2+) contacts are provided by Asp14 and Gly41. IMP-binding positions include Asp14–Lys17, Asn39–His42, Thr130, Arg144, Gln225, Thr240, and Arg304. The active-site Proton donor is His42. Ala300–Arg306 contacts substrate. Residues Arg306, Lys332–Asp334, and Ser415–Gly417 each bind GTP.

This sequence belongs to the adenylosuccinate synthetase family. As to quaternary structure, homodimer. The cofactor is Mg(2+).

It localises to the cytoplasm. It catalyses the reaction IMP + L-aspartate + GTP = N(6)-(1,2-dicarboxyethyl)-AMP + GDP + phosphate + 2 H(+). The protein operates within purine metabolism; AMP biosynthesis via de novo pathway; AMP from IMP: step 1/2. Functionally, plays an important role in the de novo pathway of purine nucleotide biosynthesis. Catalyzes the first committed step in the biosynthesis of AMP from IMP. This is Adenylosuccinate synthetase from Photobacterium profundum (strain SS9).